The primary structure comprises 148 residues: Nucleoside diphosphate kinase 1 (148 aa).

Residues Lys-9, Phe-57, Arg-85, Thr-91, Arg-102, and Asn-112 each coordinate ATP. His-115 acts as the Pros-phosphohistidine intermediate in catalysis.

The protein belongs to the NDK family. It depends on Mg(2+) as a cofactor.

The catalysed reaction is a 2'-deoxyribonucleoside 5'-diphosphate + ATP = a 2'-deoxyribonucleoside 5'-triphosphate + ADP. The enzyme catalyses a ribonucleoside 5'-diphosphate + ATP = a ribonucleoside 5'-triphosphate + ADP. Its function is as follows. Major role in the synthesis of nucleoside triphosphates other than ATP. The ATP gamma phosphate is transferred to the NDP beta phosphate via a ping-pong mechanism, using a phosphorylated active-site intermediate. The polypeptide is Nucleoside diphosphate kinase 1 (NDKP1) (Mesembryanthemum crystallinum (Common ice plant)).